A 1064-amino-acid polypeptide reads, in one-letter code: Error-prone DNA polymerase (1064 aa).

Belongs to the DNA polymerase type-C family. DnaE2 subfamily.

The protein resides in the cytoplasm. The catalysed reaction is DNA(n) + a 2'-deoxyribonucleoside 5'-triphosphate = DNA(n+1) + diphosphate. In terms of biological role, DNA polymerase involved in damage-induced mutagenesis and translesion synthesis (TLS). It is not the major replicative DNA polymerase. The protein is Error-prone DNA polymerase of Azoarcus sp. (strain BH72).